Consider the following 80-residue polypeptide: Trefoil factor 3 (80 aa).

Positions 1–21 (MAARALCMLGLVLALLSSSSA) are cleaved as a signal peptide. One can recognise a P-type domain in the interval 30–73 (NQCAVPAKDRVDCGYPHVTPKECNNRGCCFDSRIPGVPWCFKPL). Disulfide bonds link Cys-32–Cys-58, Cys-42–Cys-57, and Cys-52–Cys-69.

As to quaternary structure, monomer. Homodimer; disulfide-linked. In terms of tissue distribution, expressed in goblet cells of the intestines and colon (at protein level). Expressed by goblet cells of small and large intestinal epithelia and also by the uterus. Also expressed in the hypothalamus where it is detected in paraventricular, periventricular and supraoptic nuclei (at protein level).

It localises to the secreted. It is found in the extracellular space. The protein localises to the extracellular matrix. Its subcellular location is the cytoplasm. Involved in the maintenance and repair of the intestinal mucosa. Promotes the mobility of epithelial cells in healing processes (motogen). This Homo sapiens (Human) protein is Trefoil factor 3 (TFF3).